A 198-amino-acid chain; its full sequence is Proteasome subunit beta 1 (198 aa).

Positions 1-8 (MSMYMPGA) are cleaved as a propeptide — removed in mature form; by autocatalysis. Catalysis depends on Thr9, which acts as the Nucleophile.

It belongs to the peptidase T1B family. As to quaternary structure, the 20S proteasome core is composed of 14 alpha and 14 beta subunits that assemble into four stacked heptameric rings, resulting in a barrel-shaped structure. The two inner rings, each composed of seven catalytic beta subunits, are sandwiched by two outer rings, each composed of seven alpha subunits. The catalytic chamber with the active sites is on the inside of the barrel. Has a gated structure, the ends of the cylinder being occluded by the N-termini of the alpha-subunits. Is capped at one or both ends by the proteasome regulatory ATPase, PAN.

The protein resides in the cytoplasm. The catalysed reaction is Cleavage of peptide bonds with very broad specificity.. The formation of the proteasomal ATPase PAN-20S proteasome complex, via the docking of the C-termini of PAN into the intersubunit pockets in the alpha-rings, triggers opening of the gate for substrate entry. Interconversion between the open-gate and close-gate conformations leads to a dynamic regulation of the 20S proteasome proteolysis activity. Its function is as follows. Component of the proteasome core, a large protease complex with broad specificity involved in protein degradation. The polypeptide is Proteasome subunit beta 1 (Nitrosopumilus maritimus (strain SCM1)).